A 479-amino-acid chain; its full sequence is Probable periplasmic serine endoprotease DegP-like (479 aa).

The first 27 residues, 1–27 (MSIPRMKSYFSLIAAVLMLGQVATAQA), serve as a signal peptide directing secretion. The disordered stretch occupies residues 77-99 (LERSMPPGSRPPGAGKGDRQRET). Catalysis depends on charge relay system residues histidine 119, aspartate 149, and serine 222. Substrate-binding positions include 220-222 (GNS) and 277-281 (LGVVI). PDZ domains are found at residues 266 to 357 (LKAS…IRDG) and 363 to 468 (TVTV…LRQG).

The protein belongs to the peptidase S1C family.

Its subcellular location is the periplasm. The catalysed reaction is Acts on substrates that are at least partially unfolded. The cleavage site P1 residue is normally between a pair of hydrophobic residues, such as Val-|-Val.. In terms of biological role, might be efficient in the degradation of transiently denatured and unfolded proteins which accumulate in the periplasm following stress conditions. The polypeptide is Probable periplasmic serine endoprotease DegP-like (mucD) (Pseudomonas savastanoi pv. phaseolicola (strain 1448A / Race 6) (Pseudomonas syringae pv. phaseolicola (strain 1448A / Race 6))).